A 178-amino-acid polypeptide reads, in one-letter code: Large ribosomal subunit protein uL5 (178 aa).

The protein belongs to the universal ribosomal protein uL5 family. In terms of assembly, part of the 50S ribosomal subunit; part of the 5S rRNA/L5/L18/L25 subcomplex. Contacts the 5S rRNA and the P site tRNA. Forms a bridge to the 30S subunit in the 70S ribosome.

Its function is as follows. This is one of the proteins that bind and probably mediate the attachment of the 5S RNA into the large ribosomal subunit, where it forms part of the central protuberance. In the 70S ribosome it contacts protein S13 of the 30S subunit (bridge B1b), connecting the 2 subunits; this bridge is implicated in subunit movement. Contacts the P site tRNA; the 5S rRNA and some of its associated proteins might help stabilize positioning of ribosome-bound tRNAs. In Wigglesworthia glossinidia brevipalpis, this protein is Large ribosomal subunit protein uL5.